Here is a 286-residue protein sequence, read N- to C-terminus: L-cysteine S-thiosulfotransferase subunit SoxA (286 aa).

The first 26 residues, 1–26, serve as a signal peptide directing secretion; the sequence is MTVSKRFLAPVFAMVGGLVLAFSANA. Residues 80–166 enclose the Cytochrome c domain; the sequence is LAVERGADIW…ALTSYIKHQS (87 aa). Residues C100, C103, H104, C138, C202, C205, and H206 each coordinate heme. R243 provides a ligand contact to substrate. Residue C247 coordinates heme. Residue C247 is the Cysteine persulfide intermediate of the active site.

The protein belongs to the SoxA family. In terms of assembly, heterodimer of SoxA and SoxX. It depends on heme as a cofactor. Post-translationally, cysteine persulfide at Cys-247.

The protein localises to the periplasm. It carries out the reaction L-cysteinyl-[SoxY protein] + thiosulfate + 2 Fe(III)-[cytochrome c] = S-sulfosulfanyl-L-cysteinyl-[SoxY protein] + 2 Fe(II)-[cytochrome c] + 2 H(+). The enzyme catalyses S-sulfanyl-L-cysteinyl-[SoxY protein] + thiosulfate + 2 Fe(III)-[cytochrome c] = S-(2-sulfodisulfanyl)-L-cysteinyl-[SoxY protein] + 2 Fe(II)-[cytochrome c] + 2 H(+). Functionally, C-type diheme cytochrome, which is part of the SoxAX cytochrome complex involved in sulfur oxidation. The SoxAX complex catalyzes the formation of a heterodisulfide bond between the conserved cysteine residue on a sulfur carrier SoxYZ complex subunit SoxY and thiosulfate or other inorganic sulfur substrates. This leads to the liberation of two electrons, which may be transferred from the SoxAX complex to another cytochrome c that then channels them into the respiratory electron transport chain. Some electrons may be used for reductive CO(2) fixation. In Pseudaminobacter salicylatoxidans, this protein is L-cysteine S-thiosulfotransferase subunit SoxA.